Here is a 1627-residue protein sequence, read N- to C-terminus: Pappalysin-1 (1627 aa).

Residues 1–22 (MRLWSWVLHLGLLSAALGCGLA) form the signal peptide. Residues 23–81 (ERPRRARRDPRAGRPPRPAAGPATCATRAARGRRASPPPPPPPGGAWEAVRVPRRRQQR) constitute a propeptide that is removed on maturation. Positions 23-99 (ERPRRARRDP…PSPPSRALYF (77 aa)) are disordered. Residues 42–51 (AGPATCATRA) are compositionally biased toward low complexity. 17 disulfides stabilise this stretch: cysteine 144–cysteine 235, cysteine 327–cysteine 622, cysteine 332–cysteine 657, cysteine 414–cysteine 428, cysteine 424–cysteine 440, cysteine 457–cysteine 473, cysteine 474–cysteine 485, cysteine 583–cysteine 600, cysteine 587–cysteine 612, cysteine 710–cysteine 878, cysteine 713–cysteine 881, cysteine 753–cysteine 835, cysteine 775–cysteine 781, cysteine 947–cysteine 975, cysteine 960–cysteine 971, cysteine 983–cysteine 990, and cysteine 999–cysteine 1011. The tract at residues 272-583 (METHGAHTAL…FRGISEIQSC (312 aa)) is metalloprotease. Residues asparagine 390 and asparagine 402 are each glycosylated (N-linked (GlcNAc...) asparagine). The N-linked (GlcNAc...) asparagine glycan is linked to asparagine 429. A glycan (N-linked (GlcNAc...) asparagine) is linked at asparagine 480. Residue histidine 562 coordinates Zn(2+). Glutamate 563 is an active-site residue. Zn(2+) is bound by residues histidine 566 and histidine 572. Asparagine 601, asparagine 619, and asparagine 725 each carry an N-linked (GlcNAc...) asparagine glycan. Residues 733 to 754 (SPSGHWSPREAEGHPDVEQPCK) form a disordered region. The segment covering 739–751 (SPREAEGHPDVEQ) has biased composition (basic and acidic residues). Residue asparagine 825 is glycosylated (N-linked (GlcNAc...) asparagine). Residue asparagine 1026 is glycosylated (N-linked (GlcNAc...) asparagine). 19 disulfide bridges follow: cysteine 1036-cysteine 1070, cysteine 1051-cysteine 1139, cysteine 1192-cysteine 1205, cysteine 1215-cysteine 1269, cysteine 1227-cysteine 1238, cysteine 1242-cysteine 1280, cysteine 1285-cysteine 1329, cysteine 1300-cysteine 1310, cysteine 1314-cysteine 1342, cysteine 1346-cysteine 1399, cysteine 1362-cysteine 1373, cysteine 1377-cysteine 1410, cysteine 1415-cysteine 1458, cysteine 1428-cysteine 1438, cysteine 1442-cysteine 1471, cysteine 1478-cysteine 1539, cysteine 1492-cysteine 1502, cysteine 1506-cysteine 1554, and cysteine 1558-cysteine 1576. 5 consecutive Sushi domains span residues 1213–1282 (TDCP…ACEP), 1283–1344 (VDCS…LCEL), 1345–1412 (MCLA…ACVP), 1413–1473 (VTCD…VCQE), and 1476–1556 (GQCS…HCVK). Residues asparagine 1222 and asparagine 1226 are each glycosylated (N-linked (GlcNAc...) asparagine). Asparagine 1323 carries an N-linked (GlcNAc...) asparagine glycan. A glycan (N-linked (GlcNAc...) asparagine) is linked at asparagine 1465. The N-linked (GlcNAc...) asparagine glycan is linked to asparagine 1519.

Belongs to the peptidase M43B family. Homodimer; disulfide-linked. In pregnancy serum, predominantly found as a disulfide-linked 2:2 heterotetramer with the proform of PRG2. The cofactor is Zn(2+). In terms of processing, there appear to be no free sulfhydryl groups. As to expression, high levels in placenta and pregnancy serum. In placenta, expressed in X cells in septa and anchoring villi, and in syncytiotrophoblasts in the chorionic villi. Lower levels are found in a variety of other tissues including kidney, myometrium, endometrium, ovaries, breast, prostate, bone marrow, colon, fibroblasts and osteoblasts.

The protein localises to the secreted. It catalyses the reaction Cleavage of the 135-Met-|-Lys-136 bond in insulin-like growth factor binding protein (IGFBP)-4, and the 143-Ser-|-Lys-144 bond in IGFBP-5.. With respect to regulation, inhibited by complexation with the proform of PRG2. Functionally, metalloproteinase which specifically cleaves IGFBP-4 and IGFBP-5, resulting in release of bound IGF. Cleavage of IGFBP-4 is dramatically enhanced by the presence of IGF, whereas cleavage of IGFBP-5 is slightly inhibited by the presence of IGF. This chain is Pappalysin-1 (PAPPA), found in Homo sapiens (Human).